A 257-amino-acid polypeptide reads, in one-letter code: Imidazole glycerol phosphate synthase subunit hisF1 (257 aa).

Residues Asp11 and Asp130 contribute to the active site.

This sequence belongs to the HisA/HisF family. Heterodimer of HisH and HisF.

Its subcellular location is the cytoplasm. The catalysed reaction is 5-[(5-phospho-1-deoxy-D-ribulos-1-ylimino)methylamino]-1-(5-phospho-beta-D-ribosyl)imidazole-4-carboxamide + L-glutamine = D-erythro-1-(imidazol-4-yl)glycerol 3-phosphate + 5-amino-1-(5-phospho-beta-D-ribosyl)imidazole-4-carboxamide + L-glutamate + H(+). Its pathway is amino-acid biosynthesis; L-histidine biosynthesis; L-histidine from 5-phospho-alpha-D-ribose 1-diphosphate: step 5/9. Functionally, IGPS catalyzes the conversion of PRFAR and glutamine to IGP, AICAR and glutamate. The HisF subunit catalyzes the cyclization activity that produces IGP and AICAR from PRFAR using the ammonia provided by the HisH subunit. This Vibrio vulnificus (strain YJ016) protein is Imidazole glycerol phosphate synthase subunit hisF1 (hisF1).